Here is a 69-residue protein sequence, read N- to C-terminus: MISTSSILILVVLLACFMAASAQWGYGGYGRGYGGYGGYGRGYGGYGRGYGGYGRGMWGRPYGGYGWGK.

The signal sequence occupies residues 1–22 (MISTSSILILVVLLACFMAASA). Tyrosine amide is present on residues tyrosine 29, tyrosine 39, tyrosine 46, and tyrosine 53. Residues tryptophan 58 and tryptophan 67 each carry the tryptophan amide modification.

It belongs to the YARP (YGGW-amide related peptide) family. In terms of tissue distribution, expressed in hypoderm.

The protein resides in the secreted. Its function is as follows. May have antimicrobial activity. May play a role in response to fungal infection. The chain is Neuropeptide-like protein 30 (nlp-30) from Caenorhabditis elegans.